The following is a 650-amino-acid chain: L-aspartate N-monooxygenase (nitrosuccinate-forming) (650 aa).

It belongs to the nitrosuccinic acid synthase family. The cofactor is FAD.

The catalysed reaction is L-aspartate + 3 NADPH + 3 O2 + 2 H(+) = 2-nitrobutanedioate + 3 NADP(+) + 4 H2O. In terms of biological role, involved in the biosynthesis of desferrioxamine derivatives which have iron-binding properties and may act as siderophores. Catalyzes the iterative oxidation of L-aspartic acid to nitrosuccinic acid (2-nitrobutanedioate) via N-hydroxyaspartic acid and nitrososuccinic acid. The chain is L-aspartate N-monooxygenase (nitrosuccinate-forming) from Streptomyces davaonensis (strain DSM 101723 / JCM 4913 / KCC S-0913 / 768).